Here is a 124-residue protein sequence, read N- to C-terminus: Multifunctional methyltransferase subunit TRM112 homolog A (124 aa).

A TRM112 domain is found at 2-120 (RLITHNMLSC…NKGIPNMLLH (119 aa)).

This sequence belongs to the TRM112 family. As to quaternary structure, interacts with TRM9.

Acts as an activator of both rRNA/tRNA and protein methyltransferases. Required for TRM9 tRNA methyltransferase activity. Involved in the regulation of cell division progression during organ growth. Required for the expression of cell cycle-related genes, and the G2-M phase progression during organogenesis. The chain is Multifunctional methyltransferase subunit TRM112 homolog A from Arabidopsis thaliana (Mouse-ear cress).